The following is a 143-amino-acid chain: UPF0201 protein Pcal_0593 (143 aa).

This sequence belongs to the UPF0201 family.

The protein is UPF0201 protein Pcal_0593 of Pyrobaculum calidifontis (strain DSM 21063 / JCM 11548 / VA1).